Consider the following 1350-residue polypeptide: 1-phosphatidylinositol 4,5-bisphosphate phosphodiesterase gamma plc-3 (1350 aa).

A disordered region spans residues 1–40 (MQHGSLGPSSSSRKTTVTSTAGSVHLHHRSSNGFSTASRA). The segment covering 9-20 (SSSSRKTTVTST) has biased composition (low complexity). Over residues 31-40 (SNGFSTASRA) the composition is skewed to polar residues. The region spanning 352-503 (HDMSRPLSHY…LKKKIIVKHK (152 aa)) is the PI-PLC X-box domain. Residues His367 and His419 contribute to the active site. The disordered stretch occupies residues 570–594 (NPNDDTVSVSGDEEREEETPSGFGV). 2 SH2 domains span residues 605–704 (WFHG…TIPC) and 715–804 (WFSA…RFPV). The 59-residue stretch at 832-890 (DKEVQARALRPYRGTADDELSFPANVIITVLRKEEGLWRGRYGSLTGWFPSAHVQEILP) folds into the SH3 domain. The region spanning 855–960 (ANVIITVLRK…WQNNLFELTR (106 aa)) is the PH domain. Residues 982–1092 (LSNLVVYCQA…CGYLLKPDYM (111 aa)) enclose the PI-PLC Y-box domain. Residues 1099–1220 (PTNTEKFATA…CGFRSVPLKN (122 aa)) form the C2 domain. Positions 1270-1350 (GDSIPREMAP…KFSFGKSSKS (81 aa)) are disordered. Residues 1283-1329 (TSATDRSLDSPTNSESRATLLSGQRGSQDSMDSAAETSSIASGTISS) show a composition bias toward polar residues. A compositionally biased stretch (low complexity) spans 1340–1350 (KKFSFGKSSKS).

Requires Ca(2+) as cofactor. Expressed in intestine, isthmus of the pharynx, proximal gonad sheath cells, spermatheca and uterine sheath cells. In males, expressed in the valve cell, the vas deferens and retractor and ventral protactor muscles.

The catalysed reaction is a 1,2-diacyl-sn-glycero-3-phospho-(1D-myo-inositol-4,5-bisphosphate) + H2O = 1D-myo-inositol 1,4,5-trisphosphate + a 1,2-diacyl-sn-glycerol + H(+). Mediates the production of the second messenger molecules diacylglycerol (DAG) and inositol 1,4,5-trisphosphate (IP3) which plays an important role in the regulation of intracellular signaling cascades. Regulates basal and ovulatory sheath cell contractions by controlling Ca(2+) oscillations via IP3-mediated activation of IP3 receptor itr-1. In intestinal epithelial cells, regulates Ca(2+) oscillations which control posterior body wall muscle contractions required for defecation by IP3-mediated activation of itr-1 and probably by activating TRPM channels gon-2 and gtl-1 by reducing PIP2 levels. By activating tpa-1 via DAG production, required for the expression of antimicrobial peptide nlp-29 in the epidermis in response to fungal infection or physical injury. By triggering Ca(2+) transient via IP3-mediated activation of IPR3 receptor itr-1 in ASH sensory neurons, involved in avoidance behavior in response to nose touch. Probably by regulating neuronal transmission in ALA neurons, mediates the decrease in pharyngeal pumping and locomotion during the quiescent state that precedes each larval molt, downstream of lin-3 and receptor let-23 and upstream of tpa-1 but not itr-1. During embryogenesis, may play an role in epidermal morphogenesis together with plc-1. Probably downstream of receptor daf-2, regulates male-sex muscle excitability in the absence of food. The protein is 1-phosphatidylinositol 4,5-bisphosphate phosphodiesterase gamma plc-3 of Caenorhabditis elegans.